A 479-amino-acid polypeptide reads, in one-letter code: PTS system glucose-specific EIICB component (479 aa).

The 388-residue stretch at 1-388 (MFKNAFSNLQ…FNLKTPGREK (388 aa)) folds into the PTS EIIC type-1 domain. A run of 9 helical transmembrane segments spans residues 15–35 (SLML…IGSA), 51–71 (AGSS…ALGF), 80–100 (LAAV…IPIF), 112–132 (YLLD…AYIF), 152–172 (FVPI…SIIW), 252–272 (GGFI…WHCA), 280–300 (IGGI…TEPI), 305–325 (ILVA…AFPI), and 356–376 (LFPI…YFMI). Residues 399-479 (KETALLVISI…IDNYMSNTNQ (81 aa)) form the PTS EIIB type-1 domain. The active-site Phosphocysteine intermediate; for EIIB activity is the Cys421. Phosphocysteine is present on Cys421.

It localises to the cell inner membrane. It catalyses the reaction N(pros)-phospho-L-histidyl-[protein] + D-glucose(out) = D-glucose 6-phosphate(in) + L-histidyl-[protein]. In terms of biological role, the phosphoenolpyruvate-dependent sugar phosphotransferase system (sugar PTS), a major carbohydrate active transport system, catalyzes the phosphorylation of incoming sugar substrates concomitantly with their translocation across the cell membrane. The enzyme II complex composed of PtsG and Crr is involved in glucose transport. In Buchnera aphidicola subsp. Baizongia pistaciae (strain Bp), this protein is PTS system glucose-specific EIICB component (ptsG).